The sequence spans 160 residues: Cytochrome b6-f complex subunit 4 (160 aa).

3 consecutive transmembrane segments (helical) span residues 36-56, 95-115, and 131-151; these read LLYVFPVVIMGTIGLVVGLAV, LLGIACQAAIPLGLMLIPFIE, and TFFMIGTLVTLWLGAGAIFPI.

The protein belongs to the cytochrome b family. PetD subfamily. In terms of assembly, the 4 large subunits of the cytochrome b6-f complex are cytochrome b6, subunit IV (17 kDa polypeptide, PetD), cytochrome f and the Rieske protein, while the 4 small subunits are PetG, PetL, PetM and PetN. The complex functions as a dimer.

The protein resides in the cellular thylakoid membrane. Its function is as follows. Component of the cytochrome b6-f complex, which mediates electron transfer between photosystem II (PSII) and photosystem I (PSI), cyclic electron flow around PSI, and state transitions. In Gloeothece citriformis (strain PCC 7424) (Cyanothece sp. (strain PCC 7424)), this protein is Cytochrome b6-f complex subunit 4.